We begin with the raw amino-acid sequence, 172 residues long: Adenine phosphoribosyltransferase (172 aa).

This sequence belongs to the purine/pyrimidine phosphoribosyltransferase family. In terms of assembly, homodimer.

It localises to the cytoplasm. The enzyme catalyses AMP + diphosphate = 5-phospho-alpha-D-ribose 1-diphosphate + adenine. The protein operates within purine metabolism; AMP biosynthesis via salvage pathway; AMP from adenine: step 1/1. In terms of biological role, catalyzes a salvage reaction resulting in the formation of AMP, that is energically less costly than de novo synthesis. This chain is Adenine phosphoribosyltransferase, found in Methanococcus maripaludis (strain C5 / ATCC BAA-1333).